The chain runs to 260 residues: Flap endonuclease Xni (260 aa).

D105 is a binding site for Mg(2+). The region spanning 164 to 254 (SQFLDLLALA…LKDFRVNGPA (91 aa)) is the 5'-3' exonuclease domain. Residues L172, A173, P181, I183, and I186 each contribute to the K(+) site. The interaction with DNA stretch occupies residues 185-190 (GIGPKS).

Belongs to the Xni family. Mg(2+) serves as cofactor. It depends on K(+) as a cofactor.

Has flap endonuclease activity. During DNA replication, flap endonucleases cleave the 5'-overhanging flap structure that is generated by displacement synthesis when DNA polymerase encounters the 5'-end of a downstream Okazaki fragment. The polypeptide is Flap endonuclease Xni (Shewanella sp. (strain ANA-3)).